We begin with the raw amino-acid sequence, 394 residues long: MAAETFLFTSESVNEGHPDKLCDQVSDAVLDACLAQDPDSKVACETCTKTNMVMVFGEITTKATVDYEKIVRDTCRDIGFISDDVGLDADHCKVLVNIEQQSPDIAQGVHGHFTKRPEEVGAGDQGIMFGYATDETPELMPLTHMLATKLGARLTEVRKNGTCAWLRPDGKTQVTIEYLNEGGAMVPVRVHTVLISTQHDETVTNDEIAADLKEHVIKPVIPGKYLDENTIFHLNPSGRFVIGGPHGDAGLTARKIIIDTYGGWGAHGGGAFSGKDPTKVDRSGAYIARQAAKSIIASGLARRCIVQISYAIGVPEPLSVFVDSYGTGKIPDREILKLVKENFDFRPGMITINLDLKKGGNRFIKTAAYGHFGRDDADFTWEVVKPLKFDKASA.

Residue Glu11 participates in Mg(2+) binding. Residue His17 participates in ATP binding. Glu45 is a binding site for K(+). Residues Glu58 and Gln101 each coordinate L-methionine. Residues 169–171, 237–240, Asp248, 254–255, Ala271, Lys275, and Lys279 contribute to the ATP site; these read DGK, SGRF, and RK. Asp248 serves as a coordination point for L-methionine. Lys279 is a binding site for L-methionine.

This sequence belongs to the AdoMet synthase family. Homotetramer. It depends on Mn(2+) as a cofactor. Mg(2+) is required as a cofactor. Co(2+) serves as cofactor. Requires K(+) as cofactor.

The protein resides in the cytoplasm. It carries out the reaction L-methionine + ATP + H2O = S-adenosyl-L-methionine + phosphate + diphosphate. It participates in amino-acid biosynthesis; S-adenosyl-L-methionine biosynthesis; S-adenosyl-L-methionine from L-methionine: step 1/1. Functionally, catalyzes the formation of S-adenosylmethionine from methionine and ATP. The reaction comprises two steps that are both catalyzed by the same enzyme: formation of S-adenosylmethionine (AdoMet) and triphosphate, and subsequent hydrolysis of the triphosphate. The chain is S-adenosylmethionine synthase 1 (SAM1) from Hordeum vulgare (Barley).